Reading from the N-terminus, the 472-residue chain is Cell division protein FtsP (472 aa).

The segment at residues 1–32 (MSLSRRRFIQASGLALCAGGLPLQARASGAQA) is a signal peptide (tat-type signal).

This sequence belongs to the FtsP family. Predicted to be exported by the Tat system. The position of the signal peptide cleavage has not been experimentally proven.

The protein localises to the periplasm. Its function is as follows. Cell division protein that is required for growth during stress conditions. May be involved in protecting or stabilizing the divisomal assembly under conditions of stress. This chain is Cell division protein FtsP, found in Edwardsiella tarda (strain FL6-60).